The sequence spans 429 residues: Asparagine--tRNA ligase (429 aa).

Belongs to the class-II aminoacyl-tRNA synthetase family.

It localises to the cytoplasm. It catalyses the reaction tRNA(Asn) + L-asparagine + ATP = L-asparaginyl-tRNA(Asn) + AMP + diphosphate + H(+). This Thermoplasma acidophilum (strain ATCC 25905 / DSM 1728 / JCM 9062 / NBRC 15155 / AMRC-C165) protein is Asparagine--tRNA ligase.